We begin with the raw amino-acid sequence, 129 residues long: uncharacterized protein (129 aa).

This sequence belongs to the asfivirus C129R family.

The protein resides in the virion. Its function is as follows. Plays a role in the inhibition of type I interferon signaling pathway. Mechanistically, specifically interacts with 2',3'-cGAMP and cleaves it via its phosphodiesterase activity. In turn, prevents 2',3'-cGAMP interaction with host ER-resident STING1 leading to inhibition of downstream signaling pathway and type I interferon production. This is an uncharacterized protein from African swine fever virus (strain Badajoz 1971 Vero-adapted) (Ba71V).